Consider the following 631-residue polypeptide: Nucleoside triphosphatase I (631 aa).

Residues 42–204 (FLGLDSMHSL…TMLVNLLRPG (163 aa)) enclose the Helicase ATP-binding domain. An ATP-binding site is contributed by 55-62 (HETGVGKT). The DEXH box signature appears at 141–144 (DECH). The 166-residue stretch at 367-532 (KFIDVCLGIL…EFVQLFRVFK (166 aa)) folds into the Helicase C-terminal domain. A binding to the cap-specific mRNA (nucleoside-2'-O-)-methyltransferase region spans residues 457–524 (DIFILDMTWN…EIIQSKSKEF (68 aa)).

Belongs to the helicase family. NPH I subfamily. As to quaternary structure, monomer. Interacts (via C-terminus) with RAP94/OPG109 (via N-terminus). Interacts with the cap-specific mRNA (nucleoside-2'-O-)-methyltransferase OPG102.

The protein localises to the virion. It catalyses the reaction a ribonucleoside 5'-triphosphate + H2O = a ribonucleoside 5'-diphosphate + phosphate + H(+). DNA-dependent ATPase that acts as a 5' to 3' translocase on single-stranded DNA and thereby plays a role in transcription termination of viral early genes. Uses forward translocation in concert with the viral RNA polymerase RAP94/OPG109 subunit and the capping enzyme/VTF to catalyze release of UUUUUNU-containing nascent RNA from the elongation complex. In addition, acts as a positive elongation factor to assist transcription through problematic sequences. The protein is Nucleoside triphosphatase I (OPG123) of Variola virus (isolate Human/India/Ind3/1967) (VARV).